The primary structure comprises 1113 residues: Receptor-type guanylate cyclase gcy-18 (1113 aa).

Residues 1–18 (MLKTLLFILIFFNIPIIA) form the signal peptide. Residues 19–499 (IEEIPDIKEN…RGQRCSYLLE (481 aa)) are Extracellular-facing. N-linked (GlcNAc...) asparagine glycans are attached at residues asparagine 72, asparagine 369, and asparagine 456. Residues 500 to 520 (ISVGSLIILLILISVVFFFLF) traverse the membrane as a helical segment. Over 521 to 1113 (RYCENKQLEK…TNYIQNVEGV (593 aa)) the chain is Cytoplasmic. Residues 543-848 (IDEEQVKSMM…RVRLNTEMVL (306 aa)) form the Protein kinase domain. Residues 853–884 (SLVDQMMKMMEQYANNLEKLVAERTGMLEEAN) adopt a coiled-coil conformation. In terms of domain architecture, Guanylate cyclase spans 918 to 1048 (TILFSDIVGF…DTVNVSSRME (131 aa)). The Mg(2+) site is built by aspartate 923, isoleucine 924, and aspartate 967.

It belongs to the adenylyl cyclase class-4/guanylyl cyclase family. Expressed specifically in AFD sensory neurons.

It localises to the cell membrane. The protein resides in the cell projection. The protein localises to the cilium. It catalyses the reaction GTP = 3',5'-cyclic GMP + diphosphate. Guanylate cyclase involved in the production of the second messenger cGMP. Regulates thermotaxis responses in AFD sensory neurons. May regulate AFD neuronal activity such as calcium responses to temperature gradients. The chain is Receptor-type guanylate cyclase gcy-18 from Caenorhabditis elegans.